Here is a 123-residue protein sequence, read N- to C-terminus: Small ribosomal subunit protein uS12 (123 aa).

Residue D89 is modified to 3-methylthioaspartic acid.

It belongs to the universal ribosomal protein uS12 family. As to quaternary structure, part of the 30S ribosomal subunit. Contacts proteins S8 and S17. May interact with IF1 in the 30S initiation complex.

In terms of biological role, with S4 and S5 plays an important role in translational accuracy. Its function is as follows. Interacts with and stabilizes bases of the 16S rRNA that are involved in tRNA selection in the A site and with the mRNA backbone. Located at the interface of the 30S and 50S subunits, it traverses the body of the 30S subunit contacting proteins on the other side and probably holding the rRNA structure together. The combined cluster of proteins S8, S12 and S17 appears to hold together the shoulder and platform of the 30S subunit. This Syntrophus aciditrophicus (strain SB) protein is Small ribosomal subunit protein uS12.